The chain runs to 561 residues: Putative transport protein YbjL (561 aa).

5 helical membrane-spanning segments follow: residues 8–28 (LLNG…LCLG), 32–52 (LGSV…LLGQ), 66–86 (FMLF…SIFF), 94–114 (MLAL…GKLF), and 158–178 (NLSL…IVGA). RCK C-terminal domains follow at residues 200 to 288 (RGLD…SFRN) and 292 to 373 (VFDR…RIGF). The next 5 membrane-spanning stretches (helical) occupy residues 383–403 (LLAF…TFQF), 406–426 (FSFG…LGFL), 447–467 (FGLM…ISNG), 475–495 (MLIA…LFGA), and 540–560 (AIAN…WPGL).

The protein belongs to the AAE transporter (TC 2.A.81) family. YbjL subfamily.

Its subcellular location is the cell membrane. The chain is Putative transport protein YbjL from Salmonella typhi.